The sequence spans 284 residues: 2-dehydro-3-deoxyphosphooctonate aldolase (284 aa).

The protein belongs to the KdsA family.

It localises to the cytoplasm. The catalysed reaction is D-arabinose 5-phosphate + phosphoenolpyruvate + H2O = 3-deoxy-alpha-D-manno-2-octulosonate-8-phosphate + phosphate. It functions in the pathway carbohydrate biosynthesis; 3-deoxy-D-manno-octulosonate biosynthesis; 3-deoxy-D-manno-octulosonate from D-ribulose 5-phosphate: step 2/3. The protein operates within bacterial outer membrane biogenesis; lipopolysaccharide biosynthesis. The sequence is that of 2-dehydro-3-deoxyphosphooctonate aldolase from Glaesserella parasuis serovar 5 (strain SH0165) (Haemophilus parasuis).